A 780-amino-acid polypeptide reads, in one-letter code: Striatin (780 aa).

The stretch at Leu53–Lys120 forms a coiled coil. A caveolin-binding region spans residues Phe55–Phe63. Positions Glu124–Val145 are disordered. Ser137 is subject to Phosphoserine. Positions Gln149–Leu166 are calmodulin-binding. Thr225 bears the Phosphothreonine mark. 4 positions are modified to phosphoserine: Ser227, Ser229, Ser245, and Ser259. Disordered regions lie at residues Phe290–Arg321, Glu334–Lys353, and Asp363–Gln388. Positions Asn299 to Gln315 are enriched in basic and acidic residues. The span at Lys338 to Arg351 shows a compositional bias: basic residues. WD repeat units follow at residues Ser461–Lys500, Ala514–Tyr553, Gly567–Thr606, Ser662–Ser701, Ala704–Glu743, and Lys750–Val780.

The protein belongs to the WD repeat striatin family. As to quaternary structure, part of the core of STRIPAK complexes composed of PP2A catalytic and scaffolding subunits, the striatins (PP2A regulatory subunits), the striatin-associated proteins MOB4, STRIP1 and STRIP2, PDCD10 and members of the STE20 kinases, such as STK24 and STK26. Interacts with CTTNBP2; this interaction may regulate dendritic spine distribution of STRN. Activation of glutamate receptors weakens the interaction with CTTNBP2. Mainly expressed in the central nervous system. Mostly confined in dendrites, not in axons, and is most abundant in dendritic spines.

The protein localises to the cytoplasm. It is found in the membrane. It localises to the cell projection. Its subcellular location is the dendritic spine. Calmodulin-binding scaffolding protein which is the center of the striatin-interacting phosphatase and kinase (STRIPAK) complexes. STRIPAK complexes have critical roles in protein (de)phosphorylation and are regulators of multiple signaling pathways including Hippo, MAPK, nuclear receptor and cytoskeleton remodeling. Different types of STRIPAK complexes are involved in a variety of biological processes such as cell growth, differentiation, apoptosis, metabolism and immune regulation. In Rattus norvegicus (Rat), this protein is Striatin (Strn).